The primary structure comprises 86 residues: Beta-toxin To4 (86 aa).

An N-terminal signal peptide occupies residues 1-20; it reads MTRFVLFISCFFLIGMIVEC. Residues 21–83 form the LCN-type CS-alpha/beta domain; sequence KDGYLMEYGG…IWNRATNKCG (63 aa). 4 disulfide bridges follow: Cys31–Cys82, Cys35–Cys57, Cys43–Cys63, and Cys47–Cys65. Cys82 carries the post-translational modification Cysteine amide.

It belongs to the long (4 C-C) scorpion toxin superfamily. Sodium channel inhibitor family. Beta subfamily. Expressed by the venom gland.

It localises to the secreted. Beta toxins bind voltage-independently at site-4 of sodium channels (Nav) and shift the voltage of activation toward more negative potentials thereby affecting sodium channel activation and promoting spontaneous and repetitive firing. This toxin shows moderate inhibition of Nav1.1/SCN1A, Nav1.2/SCN2A, and Nav1.4/SCN4A, and promotes a left voltage shift on these channels. It exhibits similar potency on Nav1.2/SCN2A and Nav1.4/SCN4A (40-50% peak current inhibition at 0.5 uM), and weaker inhibition on Nav1.2 (20-30% peak current inhibition at 0.5 uM). The polypeptide is Beta-toxin To4 (Tityus obscurus (Amazonian scorpion)).